The chain runs to 481 residues: uncharacterized protein (481 aa).

It belongs to the UbiD family.

This is an uncharacterized protein from Archaeoglobus fulgidus (strain ATCC 49558 / DSM 4304 / JCM 9628 / NBRC 100126 / VC-16).